The following is a 268-amino-acid chain: (+)-cis,trans-nepetalactol synthase NEPS2 (268 aa).

NAD(+) contacts are provided by residues 16–22, 41–43, 65–66, asparagine 92, 163–167, and 196–200; these read GGASGIG, DIQ, DI, YVMSK, and VLTPL.

It belongs to the short-chain dehydrogenases/reductases (SDR) family.

It carries out the reaction (S)-8-oxocitronellyl enol = cis-trans-nepetalactol. Its function is as follows. Functions as a non-oxidoreductive cyclase to promote the formation of cis-trans-nepetalactol. Cis-trans-nepetalactol is then oxidized by NEPS1 into cis-trans-nepetalactone, which belongs to a family of metabolites that are both insect-repellent and have euphoric effect in cats. Binds NAD(+) as classical short-chain dehydrogenase/reductase (SDR), but does not utilize it for its redox-neutral cyclase activity. The protein is (+)-cis,trans-nepetalactol synthase NEPS2 of Nepeta racemosa (Catmint).